The following is a 563-amino-acid chain: KQTAETLLSLSPAETANLKEGINFFRNKTTGKEYILYKEKNHLKACKNLCKHQGGLFIKDIEDLDGRSVKCTKHNWKLDVSTMKYINPPGSFCQDELVVEMDGNDGLFLIELNPPNPWDSDPRTPEELAFGEVQITYLTHACMDLKLGDKRMVFDPWLIGPAFARGWWLLHEPPSDWLERLCKADLIYISHMHSDHLSYPTLKQLSQRRPDIPIYVGDTERPVFWNLDQSGVQLTNINVVPFGVWQQVDKNLRFMILMDGVHPEMDTCIIVEYKGHKILNTVDCTRPNGGRLPEKAALMMSDFAGGASGFPMTFSGGKFTEEWKAQFIKAERRKLLNYKAQLVKDLQPRIYCPFAGYFVESHPSDKYIKETNIKNDPIQLNNLIKKNCDVVTWTPRPGATLDLGRMLKDPTDSQGIIEPPEGTKIYKDSWDFGPYLSTLHSAVGDEIFLHSSWIKEYFTWAGFKSYNLVVRMIETDEDFNPFPGGYDYLVDFLDLSFPKERPSREHPYEEIRSRVDVVRYVVKHGLLWDDLYIGFQTRLQRDPDIYHHLFWNHFQIKLPLTPP.

The 99-residue stretch at 10-108 folds into the Rieske domain; the sequence is LSPAETANLK…VEMDGNDGLF (99 aa). Cysteine 50, histidine 52, cysteine 71, and histidine 74 together coordinate [2Fe-2S] cluster.

It belongs to the CMP-Neu5Ac hydroxylase family. [2Fe-2S] cluster serves as cofactor.

It localises to the cytoplasm. It catalyses the reaction CMP-N-acetyl-beta-neuraminate + 2 Fe(II)-[cytochrome b5] + O2 + 2 H(+) = CMP-N-glycoloyl-beta-neuraminate + 2 Fe(III)-[cytochrome b5] + H2O. The protein operates within amino-sugar metabolism; N-acetylneuraminate metabolism. Its function is as follows. Sialic acids are components of carbohydrate chains of glycoconjugates and are involved in cell-cell recognition and cell-pathogen interactions. Catalyzes the conversion of CMP-N-acetylneuraminic acid (CMP-Neu5Ac) into its hydroxylated derivative CMP-N-glycolylneuraminic acid (CMP-Neu5Gc), a sialic acid abundantly expressed at the surface of many cells. In Cricetulus griseus (Chinese hamster), this protein is Cytidine monophosphate-N-acetylneuraminic acid hydroxylase (CMAH).